Here is a 621-residue protein sequence, read N- to C-terminus: DnaJ homolog subfamily C member 2 (621 aa).

An N-acetylmethionine modification is found at Met1. Ser47, Ser49, Ser60, and Ser63 each carry phosphoserine. In terms of domain architecture, J spans 88–161; sequence DHYAVLGLGH…VKRRAFNSVD (74 aa). The segment at 160-250 is ZRF1-UBD; sequence VDPTFDNSVP…RDERRWIEKQ (91 aa). Position 183 is a phosphoserine (Ser183). Disordered regions lie at residues 294 to 315 and 427 to 453; these read EKKA…QRQA and EEAE…GSKN. SANT domains are found at residues 449 to 511 and 549 to 604; these read NGSK…KLDP and TDFT…EMVK.

Component of ribosome-associated complex (RAC), a heterodimer composed of Hsp70/DnaK-type chaperone HSPA14 and Hsp40/DnaJ-type chaperone DNAJC2. Interacts (via ZRF1-UBD region) with ID1. Post-translationally, phosphorylated in M (mitotic) phase.

The protein localises to the nucleus. Its subcellular location is the cytoplasm. It localises to the cytosol. Functionally, acts both as a chaperone in the cytosol and as a chromatin regulator in the nucleus. When cytosolic, acts as a molecular chaperone: component of the ribosome-associated complex (RAC), a complex involved in folding or maintaining nascent polypeptides in a folding-competent state. In the RAC complex, stimulates the ATPase activity of the ribosome-associated pool of Hsp70-type chaperones HSPA14 that bind to the nascent polypeptide chain. When nuclear, mediates the switching from polycomb-repressed genes to an active state: specifically recruited at histone H2A ubiquitinated at 'Lys-119' (H2AK119ub), and promotes the displacement of the polycomb PRC1 complex from chromatin, thereby facilitating transcription activation. This is DnaJ homolog subfamily C member 2 (DNAJC2) from Macaca fascicularis (Crab-eating macaque).